Here is a 200-residue protein sequence, read N- to C-terminus: Large ribosomal subunit protein uL4 (200 aa).

The disordered stretch occupies residues 43–71; sequence RAQKTRAEVSGSGKKPWRQKGTGRARSGD.

The protein belongs to the universal ribosomal protein uL4 family. In terms of assembly, part of the 50S ribosomal subunit.

In terms of biological role, one of the primary rRNA binding proteins, this protein initially binds near the 5'-end of the 23S rRNA. It is important during the early stages of 50S assembly. It makes multiple contacts with different domains of the 23S rRNA in the assembled 50S subunit and ribosome. Its function is as follows. Forms part of the polypeptide exit tunnel. The chain is Large ribosomal subunit protein uL4 from Pasteurella multocida (strain Pm70).